The sequence spans 59 residues: UPF0291 protein CPR_1073 (59 aa).

The interval methionine 1–arginine 30 is disordered.

Belongs to the UPF0291 family.

Its subcellular location is the cytoplasm. The polypeptide is UPF0291 protein CPR_1073 (Clostridium perfringens (strain SM101 / Type A)).